The chain runs to 147 residues: UPF0306 protein YhbP (147 aa).

It belongs to the UPF0306 family.

The polypeptide is UPF0306 protein YhbP (Salmonella agona (strain SL483)).